The following is a 193-amino-acid chain: dTTP/UTP pyrophosphatase (193 aa).

Catalysis depends on Asp-77, which acts as the Proton acceptor.

It belongs to the Maf family. YhdE subfamily. The cofactor is a divalent metal cation.

The protein localises to the cytoplasm. The enzyme catalyses dTTP + H2O = dTMP + diphosphate + H(+). It catalyses the reaction UTP + H2O = UMP + diphosphate + H(+). Functionally, nucleoside triphosphate pyrophosphatase that hydrolyzes dTTP and UTP. May have a dual role in cell division arrest and in preventing the incorporation of modified nucleotides into cellular nucleic acids. This chain is dTTP/UTP pyrophosphatase, found in Bacteroides fragilis (strain ATCC 25285 / DSM 2151 / CCUG 4856 / JCM 11019 / LMG 10263 / NCTC 9343 / Onslow / VPI 2553 / EN-2).